The following is a 187-amino-acid chain: Ribosome-recycling factor (187 aa).

This sequence belongs to the RRF family.

It localises to the cytoplasm. Functionally, responsible for the release of ribosomes from messenger RNA at the termination of protein biosynthesis. May increase the efficiency of translation by recycling ribosomes from one round of translation to another. This chain is Ribosome-recycling factor, found in Petrotoga mobilis (strain DSM 10674 / SJ95).